The following is a 61-amino-acid chain: MPNILSLTCICFNSVIYPTSFFFAKLPEAYAIFNPIVDFMPVIPLFFFLLAFVWQAAVSFR.

Residues 1–24 (MPNILSLTCICFNSVIYPTSFFFA) constitute a propeptide that is removed on maturation. A helical membrane pass occupies residues 32 to 52 (IFNPIVDFMPVIPLFFFLLAF).

The protein belongs to the PsbK family. PSII is composed of 1 copy each of membrane proteins PsbA, PsbB, PsbC, PsbD, PsbE, PsbF, PsbH, PsbI, PsbJ, PsbK, PsbL, PsbM, PsbT, PsbX, PsbY, PsbZ, Psb30/Ycf12, at least 3 peripheral proteins of the oxygen-evolving complex and a large number of cofactors. It forms dimeric complexes.

Its subcellular location is the plastid. It localises to the chloroplast thylakoid membrane. In terms of biological role, one of the components of the core complex of photosystem II (PSII). PSII is a light-driven water:plastoquinone oxidoreductase that uses light energy to abstract electrons from H(2)O, generating O(2) and a proton gradient subsequently used for ATP formation. It consists of a core antenna complex that captures photons, and an electron transfer chain that converts photonic excitation into a charge separation. The sequence is that of Photosystem II reaction center protein K from Triticum aestivum (Wheat).